Here is a 161-residue protein sequence, read N- to C-terminus: Nucleotide-binding protein Swoo_3646 (161 aa).

The protein belongs to the YajQ family.

Its function is as follows. Nucleotide-binding protein. This Shewanella woodyi (strain ATCC 51908 / MS32) protein is Nucleotide-binding protein Swoo_3646.